A 246-amino-acid chain; its full sequence is uncharacterized protein (246 aa).

4 helical membrane-spanning segments follow: residues 32–52, 69–89, 121–141, and 146–166; these read TLFFVRALIVTGFYLSIVGFI, IIAIVLAFIAGRVFCGWMCPF, IYFKYVVLILVVLAYLSGVKI, and LAYLLLALFLVLGFIYPMFFC. 2 consecutive 4Fe-4S ferredoxin-type domains span residues 185–213 and 210–239; these read FKLKLDENKCVGCRLCERKCPMQIKITEK and ITEKIDQMECIRCFECMSVCKKGALSFSAF. [4Fe-4S] cluster is bound by residues Cys-194, Cys-197, Cys-200, Cys-204, Cys-219, Cys-222, Cys-225, and Cys-229.

It localises to the cell membrane. This is an uncharacterized protein from Methanocaldococcus jannaschii (strain ATCC 43067 / DSM 2661 / JAL-1 / JCM 10045 / NBRC 100440) (Methanococcus jannaschii).